A 559-amino-acid polypeptide reads, in one-letter code: Glucose-6-phosphate isomerase 4 (559 aa).

Catalysis depends on Glu356, which acts as the Proton donor. Residues His387 and Lys513 contribute to the active site.

It belongs to the GPI family.

The protein localises to the cytoplasm. The catalysed reaction is alpha-D-glucose 6-phosphate = beta-D-fructose 6-phosphate. Its pathway is carbohydrate biosynthesis; gluconeogenesis. The protein operates within carbohydrate degradation; glycolysis; D-glyceraldehyde 3-phosphate and glycerone phosphate from D-glucose: step 2/4. Catalyzes the reversible isomerization of glucose-6-phosphate to fructose-6-phosphate. This is Glucose-6-phosphate isomerase 4 from Rhodococcus jostii (strain RHA1).